The primary structure comprises 334 residues: Sensor protein BceS (334 aa).

A run of 2 helical transmembrane segments spans residues 13-33 (ILIIIFLQCFTVFIAYLDSAI) and 35-55 (LAPVFYSVFLSSMIFLFFLAV). In terms of domain architecture, Histidine kinase spans 121–326 (AWIHEIKTPL…TFTLTFPKEN (206 aa)). The residue at position 124 (histidine 124) is a Phosphohistidine; by autocatalysis.

It localises to the cell membrane. It catalyses the reaction ATP + protein L-histidine = ADP + protein N-phospho-L-histidine.. In terms of biological role, member of the two-component regulatory system BceS/BceR involved in the regulation of bacitracin resistance. Activates BceR in response to extracellular bacitracin. The sequence is that of Sensor protein BceS (bceS) from Halalkalibacterium halodurans (strain ATCC BAA-125 / DSM 18197 / FERM 7344 / JCM 9153 / C-125) (Bacillus halodurans).